The primary structure comprises 289 residues: 4-diphosphocytidyl-2-C-methyl-D-erythritol kinase (289 aa).

K11 is a catalytic residue. An ATP-binding site is contributed by 95–105 (PMGGGIGGGSS). Residue D137 is part of the active site.

This sequence belongs to the GHMP kinase family. IspE subfamily.

The enzyme catalyses 4-CDP-2-C-methyl-D-erythritol + ATP = 4-CDP-2-C-methyl-D-erythritol 2-phosphate + ADP + H(+). It participates in isoprenoid biosynthesis; isopentenyl diphosphate biosynthesis via DXP pathway; isopentenyl diphosphate from 1-deoxy-D-xylulose 5-phosphate: step 3/6. In terms of biological role, catalyzes the phosphorylation of the position 2 hydroxy group of 4-diphosphocytidyl-2C-methyl-D-erythritol. The polypeptide is 4-diphosphocytidyl-2-C-methyl-D-erythritol kinase (Aeromonas hydrophila subsp. hydrophila (strain ATCC 7966 / DSM 30187 / BCRC 13018 / CCUG 14551 / JCM 1027 / KCTC 2358 / NCIMB 9240 / NCTC 8049)).